We begin with the raw amino-acid sequence, 194 residues long: Surfactant protein C (194 aa).

Positions 1–21 (MDMGSKEVLMESPPDYSTGPR) are disordered. Positions 1–23 (MDMGSKEVLMESPPDYSTGPRSQ) are excised as a propeptide. S-palmitoyl cysteine attachment occurs at residues Cys28 and Cys29. A propeptide spanning residues 59–194 (HMSQKHTEMV…LCGELPLYYI (136 aa)) is cleaved from the precursor. Residues 95–194 (FSIGSTGIVL…LCGELPLYYI (100 aa)) form the BRICHOS domain. An intrachain disulfide couples Cys122 to Cys186. Positions 149–170 (SSTPTSKLGQEEGHSAGSDSDS) are disordered.

It localises to the secreted. The protein resides in the extracellular space. The protein localises to the surface film. In terms of biological role, pulmonary surfactant associated proteins promote alveolar stability by lowering the surface tension at the air-liquid interface in the peripheral air spaces. This is Surfactant protein C from Rattus norvegicus (Rat).